The sequence spans 442 residues: METHLYYDTLYQYQGGVYPAHICLPTDVCLPMRVDCIESLYFRCVFFKSGMHYTEWSKLKFTVISREIKFKDVLKDADSDEVFTGLVVMTIPIPIVDFHFDIDSVILKLVYPRLVHREIVLRLYDLICVRPPSNRPSEASAKNIANDFYQLTSRENKQTPDEEKRCLFFQQGPLEPPSTVRGLKAPGNEKPIQFPAHANEKMTESFLSDSWFGQKVRCKKILDFTQTYQVVVCWYELSFSREMQIENNLLSASQLKRVNAADFWDRTNRYLRDIGSRVLTHIVKTLQIHNRQFKQKFNCNFPDNFSFDRLLSFMQLGKDFWILNLTLDSCIIKAIICFLGFQNGGKSFLAQDEVWGDLIDCSKGSVIYGEKIQWILDSTNNLYSTCREKQNKSWELYVDCCALYVSEKLELDFVLPGGFAITGKFALTDGDIDFFNWRFGLS.

Belongs to the herpesviridae CVC1 protein family. Interacts (via C-terminus) with capsid vertex component 2/CVC2.

The protein localises to the virion. It localises to the host nucleus. In terms of biological role, capsid vertex-specific component that plays a role during viral DNA encapsidation, assuring correct genome cleavage and presumably stabilizing capsids that contain full-length viral genomes. The chain is Capsid vertex component 1 from Human herpesvirus 6A (strain Uganda-1102) (HHV-6 variant A).